Consider the following 159-residue polypeptide: Lipoprotein LpqH (159 aa).

The signal sequence occupies residues 1 to 21; the sequence is MKRGLTVAVAGAAILVAGLSG. C22 carries N-palmitoyl cysteine lipidation. C22 carries S-diacylglycerol cysteine lipidation. A disordered region spans residues 24–51; the sequence is SNKSTTGSGETTTAAGTTASPGAASGPK. The segment covering 27–49 has biased composition (low complexity); that stretch reads STTGSGETTTAAGTTASPGAASG.

The protein belongs to the mycobacterial 19 kDa antigen family. Modified by Lgt on Cys-22 with an S-linked diacylglycerol with a mixture of C16, C18 and C19 fatty acids, signal peptide is removed by LspA, modifed by Lnt with an amide-linked mixture of C16 and C19 fatty acids.

The protein localises to the cell membrane. Functionally, might be involved in ligand transport. A host TLR2 agonist, modifies host gene expression in response to pathogen. This Mycobacterium bovis (strain ATCC BAA-935 / AF2122/97) protein is Lipoprotein LpqH (lpqH).